A 387-amino-acid polypeptide reads, in one-letter code: Succinate--CoA ligase [ADP-forming] subunit beta (387 aa).

The region spanning 9–244 is the ATP-grasp domain; it reads KQLFASYGLP…VSQEDDRENR (236 aa). ATP-binding positions include K46, 53 to 55, E99, C102, and E107; that span reads GRG. N199 and D213 together coordinate Mg(2+). Residues N264 and 321 to 323 contribute to the substrate site; that span reads GIV.

The protein belongs to the succinate/malate CoA ligase beta subunit family. Heterotetramer of two alpha and two beta subunits. Mg(2+) serves as cofactor.

The enzyme catalyses succinate + ATP + CoA = succinyl-CoA + ADP + phosphate. The catalysed reaction is GTP + succinate + CoA = succinyl-CoA + GDP + phosphate. It participates in carbohydrate metabolism; tricarboxylic acid cycle; succinate from succinyl-CoA (ligase route): step 1/1. Functionally, succinyl-CoA synthetase functions in the citric acid cycle (TCA), coupling the hydrolysis of succinyl-CoA to the synthesis of either ATP or GTP and thus represents the only step of substrate-level phosphorylation in the TCA. The beta subunit provides nucleotide specificity of the enzyme and binds the substrate succinate, while the binding sites for coenzyme A and phosphate are found in the alpha subunit. In Legionella pneumophila (strain Corby), this protein is Succinate--CoA ligase [ADP-forming] subunit beta.